Reading from the N-terminus, the 210-residue chain is Thymidylate kinase (210 aa).

10–17 (GLEGAGKS) is an ATP binding site.

This sequence belongs to the thymidylate kinase family.

The catalysed reaction is dTMP + ATP = dTDP + ADP. In terms of biological role, phosphorylation of dTMP to form dTDP in both de novo and salvage pathways of dTTP synthesis. The chain is Thymidylate kinase from Haemophilus influenzae (strain PittGG).